Consider the following 347-residue polypeptide: UPF0284 protein M1627_0030 (347 aa).

The protein belongs to the UPF0284 family.

The sequence is that of UPF0284 protein M1627_0030 from Saccharolobus islandicus (strain M.16.27) (Sulfolobus islandicus).